The primary structure comprises 255 residues: MSRPILEVSGLTMRFGGLLAVNGVNLKVEEKQVVSMIGPNGAGKTTVFNCLTGFYQPTGGLIRLDGEEIQGLPGHKIARKGVVRTFQNVRLFKEMTAVENLLVAQHRHLNTNFLAGLFKTPAFRRSEREAMEYAAHWLEEVNLTEFANRSAGTLAYGQQRRLEIARCMMTRPRILMLDEPAAGLNPKETDDLKALIAKLRSEHNVTVLLIEHDMKLVMSISDHIVVINQGAPLADGTPEQIRDNPDVIKAYLGEA.

Residues 6-254 enclose the ABC transporter domain; that stretch reads LEVSGLTMRF…PDVIKAYLGE (249 aa). 38-45 lines the ATP pocket; sequence GPNGAGKT.

This sequence belongs to the ABC transporter superfamily.

It localises to the cell inner membrane. Its function is as follows. Component of the high affinity leucine, isoleucine, valine, transport system (LIV-I), which is operative without Na(+) and is specific for alanine and threonine, in addition to branched-chain amino acids. The chain is High-affinity branched-chain amino acid transport ATP-binding protein BraF (braF) from Pseudomonas aeruginosa (strain ATCC 15692 / DSM 22644 / CIP 104116 / JCM 14847 / LMG 12228 / 1C / PRS 101 / PAO1).